Here is a 531-residue protein sequence, read N- to C-terminus: Light-independent protochlorophyllide reductase subunit B (531 aa).

Aspartate 36 contributes to the [4Fe-4S] cluster binding site. Catalysis depends on aspartate 287, which acts as the Proton donor. Substrate is bound at residue 422–423 (GL).

The protein belongs to the ChlB/BchB/BchZ family. As to quaternary structure, protochlorophyllide reductase is composed of three subunits; BchL, BchN and BchB. Forms a heterotetramer of two BchB and two BchN subunits. [4Fe-4S] cluster serves as cofactor.

It catalyses the reaction chlorophyllide a + oxidized 2[4Fe-4S]-[ferredoxin] + 2 ADP + 2 phosphate = protochlorophyllide a + reduced 2[4Fe-4S]-[ferredoxin] + 2 ATP + 2 H2O. The protein operates within porphyrin-containing compound metabolism; bacteriochlorophyll biosynthesis (light-independent). Component of the dark-operative protochlorophyllide reductase (DPOR) that uses Mg-ATP and reduced ferredoxin to reduce ring D of protochlorophyllide (Pchlide) to form chlorophyllide a (Chlide). This reaction is light-independent. The NB-protein (BchN-BchB) is the catalytic component of the complex. The sequence is that of Light-independent protochlorophyllide reductase subunit B from Rhodopseudomonas palustris (strain BisA53).